The following is a 1568-amino-acid chain: Myosin-2 (1568 aa).

The Myosin N-terminal SH3-like domain maps to 4–57; sequence EVGTRCWYPHKELGWIGAEVIKNEVKDGKYHLELSLEDDEVVSVDTEDLNDDKN. The region spanning 70–783 is the Myosin motor domain; it reads EATEDLTSLS…MLAYLEKLRS (714 aa). 164–171 serves as a coordination point for ATP; the sequence is GESGAGKT. The segment at 443–523 is actin-binding; sequence FIGVLDIYGF…LGILSLLDEE (81 aa). The disordered stretch occupies residues 619–641; it reads KKAELEQNNPGNKKPGPARTVNR. 6 consecutive IQ domains span residues 786–808, 809–833, 834–856, 857–881, 882–904, and 905–934; these read MHNS…QYLK, ISQA…YHEM, KVHS…NVFN, VLIT…KREH, EYNA…TFLN, and TKRD…DAKS. The stretch at 944–1088 forms a coiled coil; the sequence is KLENKVIELT…ISRLQTAMSL (145 aa). The tract at residues 1089-1568 is non alpha-helical, tail domain; sequence GTVTTSVLPQ…VAQQVVQDGH (480 aa). Residues 1223-1498 enclose the Dilute domain; sequence AQVLTTIQKV…LRYVADIVKK (276 aa).

The protein belongs to the TRAFAC class myosin-kinesin ATPase superfamily. Myosin family. As to quaternary structure, homodimer. Interacts with calmodulin (CMD1) and the myosin light chain MLC1 through its IQ repeats.

In terms of biological role, myosin heavy chain that is required for the cell cycle-regulated transport of various organelles and proteins for their segregation. Functions by binding with its tail domain to receptor proteins on organelles and exerting force with its N-terminal motor domain against actin filaments, thereby transporting its cargo along polarized actin cables. The polypeptide is Myosin-2 (MYO2) (Saccharomyces uvarum (strain ATCC 76518 / CBS 7001 / CLIB 283 / NBRC 10550 / MCYC 623 / NCYC 2669 / NRRL Y-11845) (Yeast)).